The sequence spans 243 residues: Max-interacting protein 1 (243 aa).

One can recognise a bHLH domain in the interval 76–128 (HYRSTHNELEKNRRAHLRLCLERLKTLIPLGPECSRHTTLGLLNKAKAHIKKL). A disordered region spans residues 164–235 (EAERIRTDSM…TASDEGYSSC (72 aa)). Positions 188-198 (DQEEMEVDVES) are enriched in acidic residues. Polar residues predominate over residues 222–235 (SLQSTASDEGYSSC).

As to quaternary structure, efficient DNA binding requires dimerization with another bHLH protein. Binds DNA as a heterodimer with MAX.

Its subcellular location is the nucleus. Transcriptional repressor. MXI1 binds with MAX to form a sequence-specific DNA-binding protein complex which recognizes the core sequence 5'-CAC[GA]TG-3'. MXI1 thus antagonizes MYC transcriptional activity by competing for MAX. The polypeptide is Max-interacting protein 1 (mxi1) (Danio rerio (Zebrafish)).